A 65-amino-acid chain; its full sequence is Large ribosomal subunit protein bL35 (65 aa).

The interval 20 to 42 (GKVRRHHANASHIMTTKTTKRKR) is disordered.

The protein belongs to the bacterial ribosomal protein bL35 family.

The sequence is that of Large ribosomal subunit protein bL35 from Syntrophus aciditrophicus (strain SB).